We begin with the raw amino-acid sequence, 109 residues long: FAD assembly factor SdhE (109 aa).

The disordered stretch occupies residues 1 to 22; that stretch reads MQDNFTASSPSSSSSASGVAED. Over residues 7–17 the composition is skewed to low complexity; it reads ASSPSSSSSAS.

The protein belongs to the SdhE FAD assembly factor family.

Its subcellular location is the cytoplasm. In terms of biological role, an FAD assembly protein, which accelerates covalent attachment of the cofactor into other proteins. Plays an essential role in the assembly of succinate dehydrogenase (SDH, respiratory complex II), an enzyme complex that is a component of both the tricarboxylic acid cycle and the electron transport chain, and which couples the oxidation of succinate to fumarate with the reduction of ubiquinone (coenzyme Q) to ubiquinol. Required for flavinylation of SdhA, when the SDH operon and this gene are overexpressed in G.oxydans. Flavinylation of SdhA is detected only in the presence of sdhE. The polypeptide is FAD assembly factor SdhE (Acetobacter pasteurianus (strain NBRC 105184 / IFO 3283-01)).